The sequence spans 462 residues: uncharacterized protein (462 aa).

A run of 2 helical transmembrane segments spans residues 12-32 (WWWL…APTV) and 257-277 (GLCV…LELV).

The protein belongs to the HHV-5 US29 protein family.

Its subcellular location is the host membrane. This is an uncharacterized protein from Homo sapiens (Human).